A 160-amino-acid chain; its full sequence is Crossover junction endodeoxyribonuclease RuvC (160 aa).

Residues D9, E68, and D141 contribute to the active site. Positions 9, 68, and 141 each coordinate Mg(2+).

It belongs to the RuvC family. As to quaternary structure, homodimer which binds Holliday junction (HJ) DNA. The HJ becomes 2-fold symmetrical on binding to RuvC with unstacked arms; it has a different conformation from HJ DNA in complex with RuvA. In the full resolvosome a probable DNA-RuvA(4)-RuvB(12)-RuvC(2) complex forms which resolves the HJ. It depends on Mg(2+) as a cofactor.

The protein resides in the cytoplasm. The catalysed reaction is Endonucleolytic cleavage at a junction such as a reciprocal single-stranded crossover between two homologous DNA duplexes (Holliday junction).. The RuvA-RuvB-RuvC complex processes Holliday junction (HJ) DNA during genetic recombination and DNA repair. Endonuclease that resolves HJ intermediates. Cleaves cruciform DNA by making single-stranded nicks across the HJ at symmetrical positions within the homologous arms, yielding a 5'-phosphate and a 3'-hydroxyl group; requires a central core of homology in the junction. The consensus cleavage sequence is 5'-(A/T)TT(C/G)-3'. Cleavage occurs on the 3'-side of the TT dinucleotide at the point of strand exchange. HJ branch migration catalyzed by RuvA-RuvB allows RuvC to scan DNA until it finds its consensus sequence, where it cleaves and resolves the cruciform DNA. This chain is Crossover junction endodeoxyribonuclease RuvC, found in Campylobacter jejuni subsp. jejuni serotype O:2 (strain ATCC 700819 / NCTC 11168).